The chain runs to 359 residues: 4-galactosyl-N-acetylglucosaminide 3-alpha-L-fucosyltransferase 9 (359 aa).

Residues 1–11 (MTSTSKGILRP) are Cytoplasmic-facing. A helical; Signal-anchor for type II membrane protein transmembrane segment spans residues 12-32 (FLIVCIILGCFMACLLIYIKP). The Lumenal portion of the chain corresponds to 33 to 359 (TNSWIFSPME…VGNLEKWFWN (327 aa)). N-linked (GlcNAc...) asparagine glycosylation occurs at N62. The segment at 63-168 (ETTILVWVWP…RRDSDIQVPY (106 aa)) is acceptor-binding. Residue Q75 participates in a beta-D-galactosyl-(1-&gt;4)-N-acetyl-beta-D-glucosaminyl derivative binding. Disulfide bonds link C82-C335, C91-C338, and C190-C238. N-linked (GlcNAc...) asparagine glycosylation occurs at N101. E137 contributes to the a beta-D-galactosyl-(1-&gt;4)-N-acetyl-beta-D-glucosaminyl derivative binding site. Residue E137 is the Nucleophile of the active site. E137 lines the GDP-beta-L-fucose pocket. N153 carries N-linked (GlcNAc...) asparagine glycosylation. Residues Y168, V192, S194, N195, R202, V226, Y241, N246, Y252, E255, and K256 each contribute to the GDP-beta-L-fucose site. A donor-binding region spans residues 169–326 (GFLTVSTNPF…NWRKDFTVNL (158 aa)). The segment at 327–359 (PRFWESHACLACDHVKRHQEYKSVGNLEKWFWN) is acceptor-binding.

Belongs to the glycosyltransferase 10 family. Homodimer. In terms of processing, N-glycosylated with complex-type N-glycans. The glycan alpha-D-Man-(1-&gt;3)-beta-D-Man-(1-&gt;4)-GlcNAc-(1-&gt;4)-GlcNAc is attached at Asn-153. Strongly expressed in forebrain and stomach, lower expression in spleen and peripheral blood leukocytes, and no expression in small intestine, colon, liver, lung, kidney, adrenal cortex or uterus. Highly expressed in granulocytes. Not expressed in monocytes.

The protein localises to the golgi apparatus. It localises to the trans-Golgi network membrane. Its subcellular location is the golgi apparatus membrane. It carries out the reaction a beta-D-galactosyl-(1-&gt;4)-N-acetyl-beta-D-glucosaminyl derivative + GDP-beta-L-fucose = a beta-D-galactosyl-(1-&gt;4)-[alpha-L-fucosyl-(1-&gt;3)]-N-acetyl-beta-D-glucosaminyl derivative + GDP + H(+). The enzyme catalyses an alpha-Neu5Ac-(2-&gt;3)-beta-D-Gal-(1-&gt;4)-beta-D-GlcNAc-(1-&gt;3)-beta-D-Gal-(1-&gt;4)-beta-D-GlcNAc derivative + GDP-beta-L-fucose = an alpha-Neu5Ac-(2-&gt;3)-beta-D-Gal-(1-&gt;4)-beta-D-GlcNAc-(1-&gt;3)-beta-D-Gal-(1-&gt;4)-[alpha-L-Fuc-(1-&gt;3)]-beta-D-GlcNAc derivative + GDP + H(+). It catalyses the reaction alpha-N-glycoloylneuraminosyl-(2-&gt;3)-beta-D-galactosyl-(1-&gt;4)-N-acetyl-beta-D-glucosaminyl-(1-&gt;3)-beta-D-galactosyl-(1-&gt;4)-N-acetyl-beta-D-glucosaminyl-(1-&gt;3)-beta-D-galactosyl-(1-&gt;4)-beta-D-glucosyl-(1&lt;-&gt;1')-ceramide + GDP-beta-L-fucose = alpha-N-glycoloylneuraminosyl-(2-&gt;3)-beta-D-galactosyl-(1-&gt;4)-N-acetyl-beta-D-glucosaminyl-(1-&gt;3)-beta-D-galactosyl-(1-&gt;4)-[alpha-L-fucosyl-(1-&gt;3)]-N-acetyl-beta-D-glucosaminyl-(1-&gt;3)-beta-D-galactosyl-(1-&gt;4)-beta-D-glucosyl-(1&lt;-&gt;1')-ceramide + GDP + H(+). The catalysed reaction is alpha-D-galactosyl-(1-&gt;3)-beta-D-galactosyl-(1-&gt;4)-N-acetyl-beta-D-glucosaminyl-(1-&gt;3)-beta-D-galactosyl-(1-&gt;4)-beta-D-glucosyl-(1&lt;-&gt;1')-ceramide + GDP-beta-L-fucose = a neolactoside IV(3)-alpha-Gal,III(3)-alpha-Fuc-nLc4Cer + GDP + H(+). It carries out the reaction a neolactoside nLc4Cer + GDP-beta-L-fucose = a neolactoside III(3)-alpha-Fuc-nLc4Cer + GDP + H(+). The enzyme catalyses an N-acetyl-alpha-neuraminyl-(2-&gt;3)-beta-D-galactosyl-(1-&gt;4)-N-acetyl-beta-D-glucosaminyl derivative + GDP-beta-L-fucose = an alpha-Neu5Ac-(2-&gt;3)-beta-D-Gal-(1-&gt;4)-[alpha-L-Fuc-(1-&gt;3)]-beta-D-GlcNAc derivative + GDP + H(+). It catalyses the reaction beta-D-Gal-(1-&gt;4)-beta-D-GlcNAc-(1-&gt;3)-beta-D-Gal-(1-&gt;4)-D-Glc + GDP-beta-L-fucose = beta-D-Gal-(1-&gt;4)-[alpha-L-Fuc-(1-&gt;3)]-beta-D-GlcNAc-(1-&gt;3)-beta-D-Gal-(1-&gt;4)-D-Glc + GDP + H(+). The catalysed reaction is an alpha-L-Fuc-(1-&gt;2)-beta-D-Gal-(1-&gt;4)-beta-D-GlcNAc derivative + GDP-beta-L-fucose = an alpha-L-Fuc-(1-&gt;2)-beta-D-Gal-(1-&gt;4)-[alpha-L-Fuc-(1-&gt;3)]-beta-D-GlcNAc derivative + GDP + H(+). It functions in the pathway protein modification; protein glycosylation. The protein operates within glycolipid biosynthesis. With respect to regulation, activated by Mn2+. Catalyzes alpha(1-&gt;3) linkage of fucosyl moiety transferred from GDP-beta-L-fucose to N-acetyl glucosamine (GlcNAc) within type 2 lactosamine (LacNAc, beta-D-Gal-(1-&gt;4)-beta-D-GlcNAc-) glycan attached to glycolipids and N- or O-linked glycoproteins. Fucosylates distal type 2 LacNAc and its fucosylated (H-type 2 LacNAc) and sialylated (sialyl-type 2 LacNAc) derivatives to form Lewis x (Lex) (CD15) and Lewis y (Ley) antigenic epitopes involved in cell adhesion and differentiation. Generates Lex epitopes in the brain, presumably playing a role in the maintenance of neuronal stemness and neurite outgrowth in progenitor neural cells. Fucosylates the internal type 2 LacNAc unit of the polylactosamine chain to form VIM-2 antigen that serves as recognition epitope for SELE. Can also modify milk oligosaccharides, in particular type 2 tetrasaccharide LNnT. The polypeptide is 4-galactosyl-N-acetylglucosaminide 3-alpha-L-fucosyltransferase 9 (Homo sapiens (Human)).